A 226-amino-acid polypeptide reads, in one-letter code: Transmembrane protein 98 (226 aa).

Residues 1–3 are Cytoplasmic-facing; it reads MET. Residues 1–88 are required for interaction with MYRF; the sequence is METVVIVAIG…ENEDWIEDAS (88 aa). A helical membrane pass occupies residues 4–24; the sequence is VVIVAIGVLATIFLASFAALV. The Extracellular segment spans residues 25–226; that stretch reads VVCRQRYCRP…EGFLQEQSAI (202 aa). A disordered region spans residues 207–226; the sequence is SEPDKSLPNPEGFLQEQSAI.

The protein belongs to the TMEM98 family. Interacts (via N-terminal region) with MYRF; the interaction inhibits MYRF self-cleavage. In terms of tissue distribution, expressed in differentiated oligodendrocytes in early postanatal central nervous system tissues. Expressed by CD4(+) T cells, the expression increases upon activation (at protein level).

The protein resides in the endoplasmic reticulum membrane. The protein localises to the cell membrane. It is found in the secreted. It localises to the extracellular exosome. Functionally, functions as a negative regulator of MYRF in oligodendrocyte differentiation and myelination. Interacts with the C-terminal of MYRF inhibiting MYRF self-cleavage and N-fragment nuclear translocation. The secreted form promotes differentiation of T helper 1 cells (Th1). The sequence is that of Transmembrane protein 98 (Tmem98) from Mus musculus (Mouse).